Consider the following 152-residue polypeptide: Transcription elongation factor Spt5 (152 aa).

Positions 98–127 (EGDLVEVVSGPFRGMQAQVVKVTEGKGEVV) constitute a KOW domain.

Belongs to the archaeal Spt5 family. In terms of assembly, heterodimer composed of Spt4 and Spt5. Interacts with RNA polymerase (RNAP).

Stimulates transcription elongation. The polypeptide is Transcription elongation factor Spt5 (Acidianus ambivalens (Desulfurolobus ambivalens)).